A 329-amino-acid polypeptide reads, in one-letter code: DNA-directed RNA polymerase subunit alpha (329 aa).

The alpha N-terminal domain (alpha-NTD) stretch occupies residues 1–231; the sequence is MQNSLLKPKA…EQLAVFAQLE (231 aa). Positions 249 to 329 are alpha C-terminal domain (alpha-CTD); the sequence is FDPILLRPVD…SWPPAALEKR (81 aa).

Belongs to the RNA polymerase alpha chain family. Homodimer. The RNAP catalytic core consists of 2 alpha, 1 beta, 1 beta' and 1 omega subunit. When a sigma factor is associated with the core the holoenzyme is formed, which can initiate transcription.

The enzyme catalyses RNA(n) + a ribonucleoside 5'-triphosphate = RNA(n+1) + diphosphate. DNA-dependent RNA polymerase catalyzes the transcription of DNA into RNA using the four ribonucleoside triphosphates as substrates. In Albidiferax ferrireducens (strain ATCC BAA-621 / DSM 15236 / T118) (Rhodoferax ferrireducens), this protein is DNA-directed RNA polymerase subunit alpha.